Here is a 105-residue protein sequence, read N- to C-terminus: MTTETFDGVRLTTKANVYFDGKCVSHSFTLPDGTKKSVGVVLPATLTFGTAAAEIMECVGGSCEYKLDGTDEWKTSGAGDSFQVPANSKFDIRVTEAYHYICHYA.

Belongs to the nucleoside phosphorylase PpnP family.

It catalyses the reaction a purine D-ribonucleoside + phosphate = a purine nucleobase + alpha-D-ribose 1-phosphate. The enzyme catalyses adenosine + phosphate = alpha-D-ribose 1-phosphate + adenine. It carries out the reaction cytidine + phosphate = cytosine + alpha-D-ribose 1-phosphate. The catalysed reaction is guanosine + phosphate = alpha-D-ribose 1-phosphate + guanine. It catalyses the reaction inosine + phosphate = alpha-D-ribose 1-phosphate + hypoxanthine. The enzyme catalyses thymidine + phosphate = 2-deoxy-alpha-D-ribose 1-phosphate + thymine. It carries out the reaction uridine + phosphate = alpha-D-ribose 1-phosphate + uracil. The catalysed reaction is xanthosine + phosphate = alpha-D-ribose 1-phosphate + xanthine. Functionally, catalyzes the phosphorolysis of diverse nucleosides, yielding D-ribose 1-phosphate and the respective free bases. Can use uridine, adenosine, guanosine, cytidine, thymidine, inosine and xanthosine as substrates. Also catalyzes the reverse reactions. In Ralstonia pickettii (strain 12J), this protein is Pyrimidine/purine nucleoside phosphorylase.